Here is a 378-residue protein sequence, read N- to C-terminus: Deoxyhypusine synthase (378 aa).

NAD(+) contacts are provided by residues 107–111 (SNLIS), 133–135 (SAG), glutamate 139, and aspartate 253. Spermidine is bound at residue 138–139 (EE). A spermidine-binding site is contributed by aspartate 258. Glycine 300 lines the NAD(+) pocket. Histidine 305 contributes to the spermidine binding site. 325–326 (TG) provides a ligand contact to NAD(+). Residues 331–333 (GSD) and 340–346 (EAISWGK) each bind spermidine. The active-site Nucleophile is lysine 346. 359 to 360 (DA) contacts NAD(+).

This sequence belongs to the deoxyhypusine synthase family. NAD(+) serves as cofactor.

The enzyme catalyses [eIF5A protein]-L-lysine + spermidine = [eIF5A protein]-deoxyhypusine + propane-1,3-diamine. Its pathway is protein modification; eIF5A hypusination. Catalyzes the NAD-dependent oxidative cleavage of spermidine and the subsequent transfer of the butylamine moiety of spermidine to the epsilon-amino group of a specific lysine residue of the eIF-5A precursor protein to form the intermediate deoxyhypusine residue. The protein is Deoxyhypusine synthase (DYS1) of Debaryomyces hansenii (strain ATCC 36239 / CBS 767 / BCRC 21394 / JCM 1990 / NBRC 0083 / IGC 2968) (Yeast).